We begin with the raw amino-acid sequence, 249 residues long: 2,3-bisphosphoglycerate-dependent phosphoglycerate mutase (249 aa).

Substrate is bound by residues 8-15 (RHGESVWN), 21-22 (TG), Arg-60, 87-90 (ERHY), Lys-98, 114-115 (RR), and 183-184 (GN). The Tele-phosphohistidine intermediate role is filled by His-9. Glu-87 functions as the Proton donor/acceptor in the catalytic mechanism.

The protein belongs to the phosphoglycerate mutase family. BPG-dependent PGAM subfamily.

It catalyses the reaction (2R)-2-phosphoglycerate = (2R)-3-phosphoglycerate. Its pathway is carbohydrate degradation; glycolysis; pyruvate from D-glyceraldehyde 3-phosphate: step 3/5. Its function is as follows. Catalyzes the interconversion of 2-phosphoglycerate and 3-phosphoglycerate. The polypeptide is 2,3-bisphosphoglycerate-dependent phosphoglycerate mutase (Endomicrobium trichonymphae).